A 264-amino-acid polypeptide reads, in one-letter code: Thymidylate synthase (264 aa).

Residue Arg-21 coordinates dUMP. Residue His-51 participates in (6R)-5,10-methylene-5,6,7,8-tetrahydrofolate binding. Residue 126–127 (RR) participates in dUMP binding. The active-site Nucleophile is the Cys-146. DUMP-binding positions include 166 to 169 (RSAD), Asn-177, and 207 to 209 (HLY). Asp-169 serves as a coordination point for (6R)-5,10-methylene-5,6,7,8-tetrahydrofolate. Ala-263 serves as a coordination point for (6R)-5,10-methylene-5,6,7,8-tetrahydrofolate.

The protein belongs to the thymidylate synthase family. Bacterial-type ThyA subfamily. Homodimer.

The protein resides in the cytoplasm. The enzyme catalyses dUMP + (6R)-5,10-methylene-5,6,7,8-tetrahydrofolate = 7,8-dihydrofolate + dTMP. It functions in the pathway pyrimidine metabolism; dTTP biosynthesis. Its function is as follows. Catalyzes the reductive methylation of 2'-deoxyuridine-5'-monophosphate (dUMP) to 2'-deoxythymidine-5'-monophosphate (dTMP) while utilizing 5,10-methylenetetrahydrofolate (mTHF) as the methyl donor and reductant in the reaction, yielding dihydrofolate (DHF) as a by-product. This enzymatic reaction provides an intracellular de novo source of dTMP, an essential precursor for DNA biosynthesis. The chain is Thymidylate synthase from Chelativorans sp. (strain BNC1).